Reading from the N-terminus, the 462-residue chain is Histidine--tRNA ligase (462 aa).

Belongs to the class-II aminoacyl-tRNA synthetase family. As to quaternary structure, homodimer.

Its subcellular location is the cytoplasm. It carries out the reaction tRNA(His) + L-histidine + ATP = L-histidyl-tRNA(His) + AMP + diphosphate + H(+). The chain is Histidine--tRNA ligase from Trichormus variabilis (strain ATCC 29413 / PCC 7937) (Anabaena variabilis).